Here is a 367-residue protein sequence, read N- to C-terminus: Flagellar P-ring protein (367 aa).

Residues 1 to 21 form the signal peptide; it reads MYVFKALAGIVLALVATLAHA.

This sequence belongs to the FlgI family. As to quaternary structure, the basal body constitutes a major portion of the flagellar organelle and consists of four rings (L,P,S, and M) mounted on a central rod.

The protein localises to the periplasm. Its subcellular location is the bacterial flagellum basal body. In terms of biological role, assembles around the rod to form the L-ring and probably protects the motor/basal body from shearing forces during rotation. The sequence is that of Flagellar P-ring protein from Salmonella arizonae (strain ATCC BAA-731 / CDC346-86 / RSK2980).